The primary structure comprises 643 residues: MSKEKASIGNGPGGIGRRQFLGTAALAGLAGVVACTDKGAAPAAAAVGAPASGAHGAAHGAGASVHLKPGELDTYYGLWSGGHTGDMRVLGLPSGREILRIPCFVPDALVGWGITNESKKVMGARPDGTLRYTVADTHHTHASYKDGNYDGRYAWVNDKINSRIARIRLDYFICDKITELPNVQGFHGIFPDKRDPVDTKINYTTRVFCGGEFGIPLPSAPTEDAGKYRSLFTCVDAETMAVRWQVLIDGNCDLVATSYDGKLAATNQYNTENGAHFEDMMSAERDACVFFNIARIEAAVQAGKFKTYGDSKVPVVDGTQAANKDPKTALTAYVSVPKNPHGVNASPDQKYFICAGKLSPTATVIELSRVLGWFDGKQEKLDDAIVAEVELGLGPLHTAFDGRGNAYTTLFLDSQLVKWNLDAAIKFHKGDKNAKYVVDRLDLQYQPGHVNASQSETVAADGKYLAVGCKFSKDRFLPVGPLHPENEQLIDISGQKMVLMADHPVRGEPHDFIIFKRELVRPKQVYALDDFPLAIKDPKESGVFRNGRKVTVKITSQAPAFSLREFKLKKGDEVTLILTNLDKIEDLTHGFAIPKYNVNFIVNPQETASVTFVADKPGVFWCYCTHFCHALHLEMRTRMIVEA.

Residues 1 to 46 (MSKEKASIGNGPGGIGRRQFLGTAALAGLAGVVACTDKGAAPAAAA) constitute a signal peptide (tat-type signal). Cu cation contacts are provided by His138, His139, and His187. Ca(2+) contacts are provided by Tyr269, Glu272, Met280, Asp286, and Asn339. 3 residues coordinate Cu cation: His341, His397, and His449. Residues Lys470 and Glu485 each contribute to the Ca(2+) site. Cu cation contacts are provided by His510, His589, Cys624, His626, Cys628, His632, and Met635. Residues 548–643 (RKVTVKITSQ…EMRTRMIVEA (96 aa)) form a COX2-like region.

It belongs to the NosZ family. In the C-terminal section; belongs to the cytochrome c oxidase subunit 2 family. Homodimer. Ca(2+) serves as cofactor. Requires Cu cation as cofactor. In terms of processing, predicted to be exported by the Tat system. The position of the signal peptide cleavage has not been experimentally proven.

Its subcellular location is the periplasm. The enzyme catalyses N2 + 2 Fe(III)-[cytochrome c] + H2O = nitrous oxide + 2 Fe(II)-[cytochrome c] + 2 H(+). It functions in the pathway nitrogen metabolism; nitrate reduction (denitrification); dinitrogen from nitrate: step 4/4. In terms of biological role, nitrous-oxide reductase is part of a bacterial respiratory system which is activated under anaerobic conditions in the presence of nitrate or nitrous oxide. In Cupriavidus necator (strain ATCC 17699 / DSM 428 / KCTC 22496 / NCIMB 10442 / H16 / Stanier 337) (Ralstonia eutropha), this protein is Nitrous-oxide reductase (nosZ).